A 2259-amino-acid polypeptide reads, in one-letter code: Protein Ycf2 (2259 aa).

1556-1563 (GSQETGRS) is an ATP binding site.

This sequence belongs to the Ycf2 family.

It is found in the plastid. It localises to the chloroplast stroma. Probable ATPase of unknown function. Its presence in a non-photosynthetic plant (Epifagus virginiana) and experiments in tobacco indicate that it has an essential function which is probably not related to photosynthesis. The polypeptide is Protein Ycf2 (Physcomitrium patens (Spreading-leaved earth moss)).